The primary structure comprises 100 residues: Defensin-6 (100 aa).

Residues 1–19 (MRTLTILTAVLLVALQAKA) form the signal peptide. The propeptide occupies 20–68 (EPLQAEDEPLQAKAYEADAQEQRGANDQDFAVSFAEDASSSLRALGSTR). 3 cysteine pairs are disulfide-bonded: C72–C99, C74–C88, and C78–C98.

This sequence belongs to the alpha-defensin family. As to quaternary structure, homodimer. Self-assembles into higher-order oligomers termed nanonets, fibril-like structures that entrap microbes. Self-assembly into nanonets seems to protect against proteolytic digestion in duodenal fluid. Interacts with Y.enterocolitica invasin and S.typhimurium fliC/flagellim; the interaction creates an anchoring site for progressive DEFA6 self-assembly into nanonets. Proteolytically cleaved by trypsin at Arg-68; the propeptide is stored in the tissue of the small intestine and the mature peptide is found in the luminal fluid; cleavage may occur during or after release into the lumen. The N-terminal propeptide region suppresses self-assembly and renders DEFA6 propeptide unable to agglutinate bacteria and protect human epithelial cells from bacterial invasion. In terms of processing, under reducing conditions, naturally present in the gut owing to the low redox potential or enzymatically generated by the thioredoxin system, the disulfide bridges are opened leading to a conformational change of DEF6, thereby changing its antimicrobial spectrum. The reduced form exhibits inhibitory activity against anaerobic bacteria, in contrast to the minimal antimicrobial activity of the disulfide-linked oxidized form. The formation of higher-order nanonets and bacterial entrapment is independent of the redox state.

Its subcellular location is the secreted. It localises to the cytoplasmic vesicle. The protein resides in the secretory vesicle. Functionally, host-defense peptide that contributes to intestinal innate immunity and mediates homeostasis at mucosal surfaces by forming higher-order oligomers that capture bacteria and prevent microbial invasion of the epithelium. After binding to bacterial surface proteins, undergoes ordered self-assembly to form fibril-like nanonets that surround and entangle bacteria and thereby prevent bacterial invasion across the epithelial barrier. Entangles and agglutinates Gram-negative bacteria, such as E.coli, S.typhimurium and Y.enterocolitica, and Gram-positive bacteria such as L.monocytogenes, thereby protecting the intestine against invasion by enteric bacterial pathogens. Blocks adhesion of C.albicans to intestinal epithelial cells and thereby suppresses fungal invasion of epithelial cells and biofilm formation. Under reducing conditions and in an acidic environment similar to the intestinal milieu, exhibits inhibitory activity against anaerobic bacteria such as B.adolescentis, L.acidophilus, and B.breve, as well as B.longum and S.thermophilus, possibly by leading to alterations in bacterial cell envelope structures. The disulfide-linked oxidized form exhibits negligible antimicrobial activity against Gram-negative and Gram-positive bacteria, as compared to the enteric defensin DEFA5. The polypeptide is Defensin-6 (DEFA6) (Pan troglodytes (Chimpanzee)).